Consider the following 353-residue polypeptide: Photosystem II protein D1 (353 aa).

Position 2 is an N-acetylthreonine (T2). T2 bears the Phosphothreonine mark. 3 consecutive transmembrane segments (helical) span residues 29-46 (YIGW…TATS), 118-133 (HFLL…EWEL), and 142-156 (WIAV…AAAA). H118 is a chlorophyll a binding site. Y126 is a binding site for pheophytin a. [CaMn4O5] cluster contacts are provided by D170 and E189. Residues 197 to 218 (FHMLGVAGVFGGSLFSAMHGSL) traverse the membrane as a helical segment. Residue H198 participates in chlorophyll a binding. Residues H215 and 264–265 (SF) each bind a quinone. H215 serves as a coordination point for Fe cation. A Fe cation-binding site is contributed by H272. The chain crosses the membrane as a helical span at residues 274–288 (FLAAWPVVGIWFTAL). Positions 332, 333, 342, and 344 each coordinate [CaMn4O5] cluster. Positions 345–353 (AVEAPSTNG) are excised as a propeptide.

Belongs to the reaction center PufL/M/PsbA/D family. In terms of assembly, PSII is composed of 1 copy each of membrane proteins PsbA, PsbB, PsbC, PsbD, PsbE, PsbF, PsbH, PsbI, PsbJ, PsbK, PsbL, PsbM, PsbT, PsbX, PsbY, PsbZ, Psb30/Ycf12, at least 3 peripheral proteins of the oxygen-evolving complex and a large number of cofactors. It forms dimeric complexes. Requires The D1/D2 heterodimer binds P680, chlorophylls that are the primary electron donor of PSII, and subsequent electron acceptors. It shares a non-heme iron and each subunit binds pheophytin, quinone, additional chlorophylls, carotenoids and lipids. D1 provides most of the ligands for the Mn4-Ca-O5 cluster of the oxygen-evolving complex (OEC). There is also a Cl(-1) ion associated with D1 and D2, which is required for oxygen evolution. The PSII complex binds additional chlorophylls, carotenoids and specific lipids. as cofactor. Post-translationally, tyr-161 forms a radical intermediate that is referred to as redox-active TyrZ, YZ or Y-Z. C-terminally processed by CTPA; processing is essential to allow assembly of the oxygen-evolving complex and thus photosynthetic growth.

It is found in the plastid. Its subcellular location is the chloroplast thylakoid membrane. The catalysed reaction is 2 a plastoquinone + 4 hnu + 2 H2O = 2 a plastoquinol + O2. In terms of biological role, photosystem II (PSII) is a light-driven water:plastoquinone oxidoreductase that uses light energy to abstract electrons from H(2)O, generating O(2) and a proton gradient subsequently used for ATP formation. It consists of a core antenna complex that captures photons, and an electron transfer chain that converts photonic excitation into a charge separation. The D1/D2 (PsbA/PsbD) reaction center heterodimer binds P680, the primary electron donor of PSII as well as several subsequent electron acceptors. The sequence is that of Photosystem II protein D1 from Panax ginseng (Korean ginseng).